Reading from the N-terminus, the 320-residue chain is Ferrochelatase (320 aa).

Fe cation is bound by residues His-194 and Glu-275.

The protein belongs to the ferrochelatase family. Monomer.

It is found in the cytoplasm. The catalysed reaction is heme b + 2 H(+) = protoporphyrin IX + Fe(2+). It participates in porphyrin-containing compound metabolism; protoheme biosynthesis; protoheme from protoporphyrin-IX: step 1/1. In terms of biological role, catalyzes the ferrous insertion into protoporphyrin IX. The protein is Ferrochelatase of Salmonella schwarzengrund (strain CVM19633).